A 443-amino-acid polypeptide reads, in one-letter code: BBSome complex member BBS5 homolog (443 aa).

This sequence belongs to the BBS5 family.

The protein localises to the cytoplasm. It is found in the cytoskeleton. The protein resides in the flagellum axoneme. The chain is BBSome complex member BBS5 homolog from Giardia intestinalis (strain ATCC 50803 / WB clone C6) (Giardia lamblia).